The primary structure comprises 491 residues: Keratin, type I cytoskeletal 24 (491 aa).

A disordered region spans residues 1–23 (MFCSAQKGSCSSRVSSSGAVGSR). The segment at 1 to 117 (MFCSAQKGSC…GYDGGLLSGS (117 aa)) is head. Positions 8-23 (GSCSSRVSSSGAVGSR) are enriched in low complexity. Residues 118 to 153 (EKQTMQGLNDRLANYLDKVRALEEANTDLETKIKDW) form a coil 1A region. Residues 118 to 432 (EKQTMQGLND…RLLNGDGGGC (315 aa)) form the IF rod domain. A linker 1 region spans residues 154–174 (YGRHGSGKDGPGRDYSQYCSV). The segment at 175–266 (IEDLKNQIIS…KNHEEEMKCL (92 aa)) is coil 1B. Residues 267-289 (QGSSGGDVTVEMNATPGTDLTKL) form a linker 12 region. The segment at 290–428 (LNDMRAQYEA…ETYRRLLNGD (139 aa)) is coil 2. The interval 429-491 (GGGCDYRNLV…VSNISEVKIK (63 aa)) is tail.

The protein belongs to the intermediate filament family. Heterotetramer of two type I and two type II keratins.

The chain is Keratin, type I cytoskeletal 24 (Krt24) from Rattus norvegicus (Rat).